We begin with the raw amino-acid sequence, 269 residues long: Glutamate 5-kinase (269 aa).

Residue Lys-14 coordinates ATP. The substrate site is built by Ser-54, Asp-141, and Asn-157. ATP is bound by residues 177–178 (SD) and 219–225 (TGGMVTK).

Belongs to the glutamate 5-kinase family.

The protein localises to the cytoplasm. It carries out the reaction L-glutamate + ATP = L-glutamyl 5-phosphate + ADP. It functions in the pathway amino-acid biosynthesis; L-proline biosynthesis; L-glutamate 5-semialdehyde from L-glutamate: step 1/2. Catalyzes the transfer of a phosphate group to glutamate to form L-glutamate 5-phosphate. This Clostridium perfringens (strain 13 / Type A) protein is Glutamate 5-kinase.